The primary structure comprises 108 residues: UPF0145 protein Tmel_1129 (108 aa).

It belongs to the UPF0145 family.

This chain is UPF0145 protein Tmel_1129, found in Thermosipho melanesiensis (strain DSM 12029 / CIP 104789 / BI429).